Consider the following 84-residue polypeptide: Cytochrome b559 subunit alpha (84 aa).

Residues 22 to 36 (IIHSITIPSLFVAGF) traverse the membrane as a helical segment. Residue H24 coordinates heme.

The protein belongs to the PsbE/PsbF family. As to quaternary structure, heterodimer of an alpha subunit and a beta subunit. PSII is composed of 1 copy each of membrane proteins PsbA, PsbB, PsbC, PsbD, PsbE, PsbF, PsbH, PsbI, PsbJ, PsbK, PsbL, PsbM, PsbT, PsbX, PsbY, PsbZ, Psb30/Ycf12, at least 3 peripheral proteins of the oxygen-evolving complex and a large number of cofactors. It forms dimeric complexes. The cofactor is heme b.

It localises to the plastid. The protein resides in the chloroplast thylakoid membrane. Functionally, this b-type cytochrome is tightly associated with the reaction center of photosystem II (PSII). PSII is a light-driven water:plastoquinone oxidoreductase that uses light energy to abstract electrons from H(2)O, generating O(2) and a proton gradient subsequently used for ATP formation. It consists of a core antenna complex that captures photons, and an electron transfer chain that converts photonic excitation into a charge separation. The polypeptide is Cytochrome b559 subunit alpha (Emiliania huxleyi (Coccolithophore)).